We begin with the raw amino-acid sequence, 375 residues long: tRNA (guanine(26)-N(2))-dimethyltransferase (375 aa).

The Trm1 methyltransferase domain occupies 2–368 (KYITEGNTKL…AKLIDIVEFI (367 aa)). 5 residues coordinate S-adenosyl-L-methionine: R35, R66, D89, D116, and A117.

This sequence belongs to the class I-like SAM-binding methyltransferase superfamily. Trm1 family.

It carries out the reaction guanosine(26) in tRNA + 2 S-adenosyl-L-methionine = N(2)-dimethylguanosine(26) in tRNA + 2 S-adenosyl-L-homocysteine + 2 H(+). In terms of biological role, dimethylates a single guanine residue at position 26 of a number of tRNAs using S-adenosyl-L-methionine as donor of the methyl groups. In Methanococcus aeolicus (strain ATCC BAA-1280 / DSM 17508 / OCM 812 / Nankai-3), this protein is tRNA (guanine(26)-N(2))-dimethyltransferase.